A 216-amino-acid polypeptide reads, in one-letter code: ATP-dependent Clp protease proteolytic subunit (216 aa).

S103 acts as the Nucleophile in catalysis. Residue H128 is part of the active site. A disordered region spans residues 197 to 216; it reads RRPALPGDDAPRDVSEGPTP.

It belongs to the peptidase S14 family. In terms of assembly, fourteen ClpP subunits assemble into 2 heptameric rings which stack back to back to give a disk-like structure with a central cavity, resembling the structure of eukaryotic proteasomes.

The protein localises to the cytoplasm. It catalyses the reaction Hydrolysis of proteins to small peptides in the presence of ATP and magnesium. alpha-casein is the usual test substrate. In the absence of ATP, only oligopeptides shorter than five residues are hydrolyzed (such as succinyl-Leu-Tyr-|-NHMec, and Leu-Tyr-Leu-|-Tyr-Trp, in which cleavage of the -Tyr-|-Leu- and -Tyr-|-Trp bonds also occurs).. Its function is as follows. Cleaves peptides in various proteins in a process that requires ATP hydrolysis. Has a chymotrypsin-like activity. Plays a major role in the degradation of misfolded proteins. This is ATP-dependent Clp protease proteolytic subunit from Sphingopyxis alaskensis (strain DSM 13593 / LMG 18877 / RB2256) (Sphingomonas alaskensis).